Reading from the N-terminus, the 184-residue chain is TATA-box-binding protein (184 aa).

A run of 2 repeats spans residues Ile9 to Leu85 and Val100 to Leu178.

It belongs to the TBP family.

In terms of biological role, general factor that plays a role in the activation of archaeal genes transcribed by RNA polymerase. Binds specifically to the TATA box promoter element which lies close to the position of transcription initiation. The chain is TATA-box-binding protein from Thermoplasma volcanium (strain ATCC 51530 / DSM 4299 / JCM 9571 / NBRC 15438 / GSS1).